The sequence spans 336 residues: Flavonoid 4'-O-methyltransferase 5 (336 aa).

Residues tyrosine 140 and aspartate 203 each coordinate S-adenosyl-L-methionine. Histidine 241 (proton acceptor) is an active-site residue.

It belongs to the class I-like SAM-binding methyltransferase superfamily. Cation-independent O-methyltransferase family. Homodimer. Expressed in leaves.

The catalysed reaction is genkwanin + S-adenosyl-L-methionine = apigenin 4',7-dimethyl ether + S-adenosyl-L-homocysteine. It catalyses the reaction cirsiliol + S-adenosyl-L-methionine = eupatorin + S-adenosyl-L-homocysteine + H(+). The enzyme catalyses cirsimaritin + S-adenosyl-L-methionine = salvigenin + S-adenosyl-L-homocysteine + H(+). It carries out the reaction scutellarein 7-methyl ether + S-adenosyl-L-methionine = ladanein + S-adenosyl-L-homocysteine + H(+). The catalysed reaction is (2S)-sakuranetin + S-adenosyl-L-methionine = (2S)-naringenin 4',7-dimethyl ether + S-adenosyl-L-homocysteine + H(+). The protein operates within flavonoid metabolism. Its activity is regulated as follows. Substrate inhibition by genkwanin (GENK) at concentrations above 10 mM. Its function is as follows. Flavonoid 4'-O-methyltransferase involved in the biosynthesis of polymethoxylated flavonoids natural products such as nevadensin and salvigenin, aroma compounds which contribute to the flavor of sweet basil, and exhibit pharmacological activities such as anti-allergic, anti-oxidant, antibacterial, anti-proliferative, and anti-inflammatory effects. Catalyzes S-adenosylmethionine-dependent regioselective 4'-O-methylation of flavonoids; active on various hydroxylated flavonoid substrates, including scutellarein-7-methyl ether (SCU7Me) and, with a lower efficiency, cirsimaritin (CIRM), sakuranetin (NAR7Me), ladanein (LAD) and genkwanin (GENK). This chain is Flavonoid 4'-O-methyltransferase 5, found in Ocimum basilicum (Sweet basil).